A 323-amino-acid polypeptide reads, in one-letter code: MSNNNSKLEFVPNIQLKEDLGAFSYKVQLSPVEKGMAHILGNSIRRVLLSSLSGASIIKVNIANVLHEYSTLEDVKEDVVEIVSNLKKVAIKLDTGIDRLDLELSVNKSGVVSAGDFKTTQGVEIINKDQPIATLTNQRAFSLTATVSVGRNVGILSAIPTELERVGDIAVDADFNPIKRVAFEVFDNGDSETLEVFVKTNGTIEPLAAVTKALEYFCEQISVFVSLRVPSNGKTGDVLIDSNIDPILLKPIDDLELTVRSSNCLRAENIKYLGDLVQYSESQLMKIPNLGKKSLNEIKQILIDNNLSLGVQIDNFRELVEGK.

Residues 1–228 (MSNNNSKLEF…EQISVFVSLR (228 aa)) are alpha N-terminal domain (alpha-NTD). Residues 244 to 323 (IDPILLKPID…DNFRELVEGK (80 aa)) are alpha C-terminal domain (alpha-CTD).

It belongs to the RNA polymerase alpha chain family. As to quaternary structure, homodimer. The RNAP catalytic core consists of 2 alpha, 1 beta, 1 beta' and 1 omega subunit. When a sigma factor is associated with the core the holoenzyme is formed, which can initiate transcription.

The catalysed reaction is RNA(n) + a ribonucleoside 5'-triphosphate = RNA(n+1) + diphosphate. Functionally, DNA-dependent RNA polymerase catalyzes the transcription of DNA into RNA using the four ribonucleoside triphosphates as substrates. This chain is DNA-directed RNA polymerase subunit alpha 1, found in Francisella tularensis subsp. tularensis (strain FSC 198).